The primary structure comprises 906 residues: Catenin alpha-2 (906 aa).

Residues 866 to 880 show a composition bias toward basic and acidic residues; that stretch reads KKPLVKREKPEEYQT. The interval 866–892 is disordered; the sequence is KKPLVKREKPEEYQTRVRRGSQKKHIS. Residues 881–891 show a composition bias toward basic residues; the sequence is RVRRGSQKKHI.

Belongs to the vinculin/alpha-catenin family. In terms of assembly, interacts with CDH1 and CDH2. As to expression, mainly in the nervous system (at protein level).

It is found in the cell membrane. Its subcellular location is the cytoplasm. It localises to the cytoskeleton. The protein resides in the cell junction. The protein localises to the adherens junction. It is found in the cell projection. Its subcellular location is the axon. It localises to the nucleus. May function as a linker between cadherin adhesion receptors and the cytoskeleton to regulate cell-cell adhesion and differentiation in the nervous system. In Gallus gallus (Chicken), this protein is Catenin alpha-2 (CTNNA2).